The primary structure comprises 266 residues: ATP synthase subunit a (266 aa).

6 consecutive transmembrane segments (helical) span residues 38–58 (KQML…ILAA), 99–119 (LLFS…IPVI), 126–146 (HVGG…IIGI), 162–182 (GVPW…NFLV), 191–211 (LFAT…GIEF), and 224–244 (SVLV…IMAL).

It belongs to the ATPase A chain family. In terms of assembly, F-type ATPases have 2 components, CF(1) - the catalytic core - and CF(0) - the membrane proton channel. CF(1) has five subunits: alpha(3), beta(3), gamma(1), delta(1), epsilon(1). CF(0) has three main subunits: a(1), b(2) and c(9-12). The alpha and beta chains form an alternating ring which encloses part of the gamma chain. CF(1) is attached to CF(0) by a central stalk formed by the gamma and epsilon chains, while a peripheral stalk is formed by the delta and b chains.

The protein resides in the cell membrane. Its function is as follows. Key component of the proton channel; it plays a direct role in the translocation of protons across the membrane. This is ATP synthase subunit a from Paenarthrobacter aurescens (strain TC1).